Reading from the N-terminus, the 262-residue chain is 5'-nucleotidase SurE (262 aa).

Positions 11, 12, 43, and 101 each coordinate a divalent metal cation.

The protein belongs to the SurE nucleotidase family. A divalent metal cation is required as a cofactor.

It localises to the cytoplasm. It carries out the reaction a ribonucleoside 5'-phosphate + H2O = a ribonucleoside + phosphate. Nucleotidase that shows phosphatase activity on nucleoside 5'-monophosphates. This chain is 5'-nucleotidase SurE, found in Prochlorococcus marinus (strain NATL1A).